Here is a 487-residue protein sequence, read N- to C-terminus: 3-octaprenyl-4-hydroxybenzoate carboxy-lyase (487 aa).

Residue Asn172 participates in Mn(2+) binding. Residues 175–177, 189–191, and 194–195 each bind prenylated FMN; these read IYR, RWL, and RG. Glu238 contributes to the Mn(2+) binding site. Catalysis depends on Asp287, which acts as the Proton donor.

This sequence belongs to the UbiD family. As to quaternary structure, homohexamer. Requires prenylated FMN as cofactor. The cofactor is Mn(2+).

Its subcellular location is the cell membrane. It catalyses the reaction a 4-hydroxy-3-(all-trans-polyprenyl)benzoate + H(+) = a 2-(all-trans-polyprenyl)phenol + CO2. It functions in the pathway cofactor biosynthesis; ubiquinone biosynthesis. Catalyzes the decarboxylation of 3-octaprenyl-4-hydroxy benzoate to 2-octaprenylphenol, an intermediate step in ubiquinone biosynthesis. The sequence is that of 3-octaprenyl-4-hydroxybenzoate carboxy-lyase from Blochmanniella pennsylvanica (strain BPEN).